We begin with the raw amino-acid sequence, 784 residues long: Cation/H(+) antiporter 26 (784 aa).

Helical transmembrane passes span 38–58, 61–81, 97–117, 130–150, 201–221, 240–260, 286–306, 321–341, 351–371, 376–396, and 413–433; these read PLLLLLISLVSSLSSVFQALL, LANVDFVTQILAGIFLGPSAL, YFIIESFEAISFMFISYISTA, LAIINGLSLFLFPYVVGAIAC, LALSSIMVANCFGWGFFLLLI, FTKVLLLVGIVVVCRPIFNWI, TFLSETVGFPYVVGSVALGLV, IGSFCYAVLMPCYVIGIGNKV, IISLEFLIFTISAAKFASIVL, FQVPISHAVIVGFIVCIQGIY, and EAFGIMVISAMVHSTIFTAIV.

It belongs to the monovalent cation:proton antiporter 2 (CPA2) transporter (TC 2.A.37) family. CHX (TC 2.A.37.4) subfamily. In terms of tissue distribution, expressed in pollen.

It is found in the membrane. Functionally, may operate as a cation/H(+) antiporter. The polypeptide is Cation/H(+) antiporter 26 (CHX26) (Arabidopsis thaliana (Mouse-ear cress)).